A 118-amino-acid chain; its full sequence is Large ribosomal subunit protein bL20 (118 aa).

The protein belongs to the bacterial ribosomal protein bL20 family.

Functionally, binds directly to 23S ribosomal RNA and is necessary for the in vitro assembly process of the 50S ribosomal subunit. It is not involved in the protein synthesizing functions of that subunit. This chain is Large ribosomal subunit protein bL20, found in Francisella tularensis subsp. tularensis (strain FSC 198).